We begin with the raw amino-acid sequence, 380 residues long: Tomoregulin-1 (380 aa).

A signal peptide spans 1–39 (MGAAAAEAPLRLPAAPPLAFCCYTSVLLLFAFSLPGSRA). Residues 40–330 (SNQPPGGGGG…VPSRQKLTHV (291 aa)) lie on the Extracellular side of the membrane. 2 Kazal-like domains span residues 98–145 (ACQF…PCYS) and 189–237 (VCNI…HCTD). 9 cysteine pairs are disulfide-bonded: cysteine 99/cysteine 129, cysteine 103/cysteine 122, cysteine 111/cysteine 143, cysteine 190/cysteine 221, cysteine 194/cysteine 214, cysteine 203/cysteine 235, cysteine 275/cysteine 288, cysteine 283/cysteine 299, and cysteine 301/cysteine 310. The EGF-like domain occupies 271-311 (NHMPCPENLNGYCIHGKCEFIYSTQKASCRCESGYTGQHCE). Residues 331 to 351 (LIAAIIGAVQIAIIVAIVMCI) traverse the membrane as a helical segment. Over 352–380 (TRKCPKNNRGRRQKQNLGHFTSDTSSRMV) the chain is Cytoplasmic. The segment at 359–380 (NRGRRQKQNLGHFTSDTSSRMV) is disordered. The span at 366-380 (QNLGHFTSDTSSRMV) shows a compositional bias: polar residues.

The protein belongs to the tomoregulin family. As to quaternary structure, may interact with ST14. In terms of tissue distribution, expressed predominantly in brain, and at lower levels in heart, placenta and skeletal muscle. Down-regulated in brain tumors as compared to control brain tissues.

Its subcellular location is the cell membrane. Its function is as follows. Neuron-specific restriction factor that prevents herpes simplex virus 1 (HHV-1) infection in the brain by blocking viral entry. Also able to restrict herpes simplex virus 2 (HHV-2) infection, although to a lesser extent. Acts by preventing the association between the viral glycoprotein D (gD) and its cell surface receptor NECTIN1, thereby inhibiting fusion of the virus and the cell membrane. Also able to prevent the association between the viral glycoprotein B (gB) and MYH9/NMMHC-IIA and MYH10/NMMHC-IIB receptors. May be a tumor suppressor in brain cancers. The protein is Tomoregulin-1 of Homo sapiens (Human).